We begin with the raw amino-acid sequence, 395 residues long: Guanine nucleotide-binding protein subunit beta-5 (395 aa).

7 WD repeats span residues 103-142, 145-184, 193-234, 236-278, 279-318, 320-362, and 365-394; these read GHGN…KEHA, MPCT…NENM, MHTN…QSFH, HGAD…QAFE, THES…EVAI, SKES…RVSI, and GHEN…LRVW.

Belongs to the WD repeat G protein beta family. In terms of assembly, component of a complex composed of RGS9 (isoform RGS9-1), GNB5 and RGS9BP; within this complex, the presence of GNB5 stabilizes both itself and RGS9 and increases RGS9 GTPase-activating protein (GAP) activity. Interacts with RGS7, forming the RGS7-GNB5 complex; within this complex, the presence of GNB5 increases RGS7 GTPase-activating protein (GAP) activity. Interacts with GPR158; promotes the GTPase activator activity of the RGS7-GNB5 complex in absence of glycine, in contrast GTPase activator activity of the RGS7-GNB5 complex is inhibited in presence of glycine. Interacts with RGS6. Widely expressed.

The protein resides in the membrane. In terms of biological role, enhances GTPase-activating protein (GAP) activity of regulator of G protein signaling (RGS) proteins, such as RGS7 and RGS9, hence involved in the termination of the signaling initiated by the G protein coupled receptors (GPCRs) by accelerating the GTP hydrolysis on the G-alpha subunits, thereby promoting their inactivation. Increases RGS7 GTPase-activating protein (GAP) activity, thereby regulating mood and cognition. Increases RGS9 GTPase-activating protein (GAP) activity, hence contributes to the deactivation of G protein signaling initiated by D(2) dopamine receptors. May play an important role in neuronal signaling, including in the parasympathetic, but not sympathetic, control of heart rate. This Homo sapiens (Human) protein is Guanine nucleotide-binding protein subunit beta-5 (GNB5).